Consider the following 122-residue polypeptide: Large ribosomal subunit protein uL14 (122 aa).

Belongs to the universal ribosomal protein uL14 family. In terms of assembly, part of the 50S ribosomal subunit. Forms a cluster with proteins L3 and L19. In the 70S ribosome, L14 and L19 interact and together make contacts with the 16S rRNA in bridges B5 and B8.

Its function is as follows. Binds to 23S rRNA. Forms part of two intersubunit bridges in the 70S ribosome. The sequence is that of Large ribosomal subunit protein uL14 from Malacoplasma penetrans (strain HF-2) (Mycoplasma penetrans).